The sequence spans 1310 residues: PAN2-PAN3 deadenylation complex catalytic subunit pan2 (1310 aa).

4 WD repeats span residues 22 to 61, 67 to 105, 106 to 144, and 145 to 184; these read YHAGPASTIAFDNQDELLWIGTQKGFAGSFIGRELKRFTA, ETDGPLRQFLFVDKGVIFLGSRSVYMAARSGVPIWSIRH, ESMQDLRAMSFTSKGTSEILVAGWQNKMLVIDVNKGEVV, and KELPTQDQYSFLKMSRYICAATNKGTVNILDPITFTIKKQ. Positions 318-463 are linker; the sequence is QFTEIGIPPR…NNDHWSLRPE (146 aa). A USP domain is found at 463-850; it reads EAPPEYRICE…MPVVVMFQVK (388 aa). Zn(2+) contacts are provided by histidine 525, cysteine 530, cysteine 535, cysteine 538, cysteine 645, cysteine 648, cysteine 700, and cysteine 703. The Exonuclease domain maps to 897-1070; sequence IAIDTEFIRL…EDAQTALKLY (174 aa). Aspartate 900, glutamate 902, aspartate 1009, and aspartate 1062 together coordinate a divalent metal cation. Residues 1121 to 1169 form a disordered region; it reads TPPVPAPGTTEGSFEISNSSTATTGGSALSATGGMGSASASSSMPSTPV. A compositionally biased stretch (low complexity) spans 1139-1168; that stretch reads SSTATTGGSALSATGGMGSASASSSMPSTP.

This sequence belongs to the peptidase C19 family. PAN2 subfamily. In terms of assembly, forms a heterotrimer with an asymmetric homodimer of the regulatory subunit par-2/pan3 to form the poly(A)-nuclease (PAN) deadenylation complex. Requires a divalent metal cation as cofactor.

It localises to the cytoplasm. The enzyme catalyses Exonucleolytic cleavage of poly(A) to 5'-AMP.. Positively regulated by the regulatory subunit par-2/pan3. Functionally, catalytic subunit of the poly(A)-nuclease (PAN) deadenylation complex, one of two cytoplasmic mRNA deadenylases involved in mRNA turnover. PAN specifically shortens poly(A) tails of RNA and the activity is stimulated by poly(A)-binding protein pabp-1. PAN deadenylation is followed by rapid degradation of the shortened mRNA tails by the CCR4-NOT complex. Deadenylated mRNAs are then degraded by two alternative mechanisms, namely exosome-mediated 3'-5' exonucleolytic degradation, or deadenylation-dependent mRNA decaping and subsequent 5'-3' exonucleolytic degradation by rgb-30/xrn1. May also be involved in post-transcriptional maturation of mRNA poly(A) tails. This is PAN2-PAN3 deadenylation complex catalytic subunit pan2 (par-1) from Neurospora crassa (strain ATCC 24698 / 74-OR23-1A / CBS 708.71 / DSM 1257 / FGSC 987).